The sequence spans 1449 residues: Gag-Pol polyprotein (1449 aa).

The N-myristoyl glycine; by host moiety is linked to residue Gly-2. The Nuclear export signal motif lies at 16–22 (LEKIRLR). The short motif at 26–32 (KKRYQLK) is the Nuclear localization signal element. 2 consecutive CCHC-type zinc fingers follow at residues 392 to 409 (IKCW…QCRA) and 413 to 430 (QGCW…KCPE). A disordered region spans residues 442 to 494 (GKEAPQFPHGPDASGADTNCSPRGSSCGSTEELHEDGQKAEGEQRETLQGGNG). Polar residues predominate over residues 457–470 (ADTNCSPRGSSCGS). Residues 472-487 (EELHEDGQKAEGEQRE) show a composition bias toward basic and acidic residues. The Peptidase A2 domain maps to 518–587 (VEVLLDTGAD…TPINIFGRNL (70 aa)). The For protease activity; shared with dimeric partner role is filled by Asp-523. In terms of domain architecture, Reverse transcriptase spans 641-831 (DGQLEEAPPT…PPFQWMGYEL (191 aa)). The Mg(2+) site is built by Asp-707, Asp-782, and Asp-783. The tract at residues 824–832 (FQWMGYELW) is RT 'primer grip'. Positions 994–1010 (WEQWWTDYWQVTWIPEW) match the Tryptophan repeat motif motif. Residues 1030 to 1153 (IQGAETFYVD…VDHLVSQGIR (124 aa)) enclose the RNase H type-1 domain. Residues Asp-1039, Glu-1074, Asp-1094, and Asp-1145 each contribute to the Mg(2+) site. The segment at 1159-1200 (EKIEPAQEEHEKYHSNVKELVFKFGLPRLVAKQIVDTCDKCH) adopts an Integrase-type zinc-finger fold. Residues His-1168, His-1172, Cys-1196, and Cys-1199 each coordinate Zn(2+). Positions 1210 to 1360 (VNAELGTWQM…TPAERLVNMI (151 aa)) constitute an Integrase catalytic domain. Mg(2+) contacts are provided by Asp-1220 and Asp-1272. A DNA-binding region (integrase-type) is located at residues 1379–1426 (FRVYYREGRDQLWKGPGELLWKGEGAVILKVGTEIKVVPRRKAKIIKD).

In terms of assembly, homotrimer. Interacts with gp41 (via C-terminus). Homodimer. The active site consists of two apposed aspartic acid residues. As to quaternary structure, heterodimer of p66 RT and p51 RT (RT p66/p51). Heterodimerization of RT is essential for DNA polymerase activity. Despite the sequence identities, p66 RT and p51 RT have distinct folding. In terms of assembly, homotetramer; may further associate as a homohexadecamer. Mg(2+) is required as a cofactor. Specific enzymatic cleavages by the viral protease yield mature proteins. The protease is released by autocatalytic cleavage. The polyprotein is cleaved during and after budding, this process is termed maturation. Proteolytic cleavage of p66 RT removes the RNase H domain to yield the p51 RT subunit. In terms of processing, capsid protein p24 is phosphorylated.

It is found in the virion. Its subcellular location is the host nucleus. The protein localises to the host cytoplasm. The protein resides in the host cell membrane. The enzyme catalyses Specific for a P1 residue that is hydrophobic, and P1' variable, but often Pro.. It catalyses the reaction Endohydrolysis of RNA in RNA/DNA hybrids. Three different cleavage modes: 1. sequence-specific internal cleavage of RNA. Human immunodeficiency virus type 1 and Moloney murine leukemia virus enzymes prefer to cleave the RNA strand one nucleotide away from the RNA-DNA junction. 2. RNA 5'-end directed cleavage 13-19 nucleotides from the RNA end. 3. DNA 3'-end directed cleavage 15-20 nucleotides away from the primer terminus.. The catalysed reaction is 3'-end directed exonucleolytic cleavage of viral RNA-DNA hybrid.. It carries out the reaction DNA(n) + a 2'-deoxyribonucleoside 5'-triphosphate = DNA(n+1) + diphosphate. With respect to regulation, the viral protease is inhibited by many synthetic protease inhibitors (PIs), such as amprenavir, atazanavir, indinavir, loprinavir, nelfinavir, ritonavir and saquinavir. RT can be inhibited either by nucleoside RT inhibitors (NRTIs) or by non nucleoside RT inhibitors (NNRTIs). NRTIs act as chain terminators, whereas NNRTIs inhibit DNA polymerization by binding a small hydrophobic pocket near the RT active site and inducing an allosteric change in this region. Classical NRTIs are abacavir, adefovir (PMEA), didanosine (ddI), lamivudine (3TC), stavudine (d4T), tenofovir (PMPA), zalcitabine (ddC), and zidovudine (AZT). Classical NNRTIs are atevirdine (BHAP U-87201E), delavirdine, efavirenz (DMP-266), emivirine (I-EBU), and nevirapine (BI-RG-587). The tritherapies used as a basic effective treatment of AIDS associate two NRTIs and one NNRTI. Use of protease inhibitors in tritherapy regimens permit more ambitious therapeutic strategies. Gag-Pol polyprotein and Gag polyprotein may regulate their own translation, by the binding genomic RNA in the 5'-UTR. At low concentration, Gag-Pol and Gag would promote translation, whereas at high concentration, the polyproteins encapsidate genomic RNA and then shut off translation. In terms of biological role, matrix protein p17 has two main functions: in infected cell, it targets Gag and Gag-pol polyproteins to the plasma membrane via a multipartite membrane-binding signal, that includes its myristointegration complex. The myristoylation signal and the NLS exert conflicting influences its subcellular localization. The key regulation of these motifs might be phosphorylation of a portion of MA molecules on the C-terminal tyrosine at the time of virus maturation, by virion-associated cellular tyrosine kinase. Implicated in the release from host cell mediated by Vpu. Functionally, capsid protein p24 forms the conical core that encapsulates the genomic RNA-nucleocapsid complex in the virion. The core is constituted by capsid protein hexamer subunits. The core is disassembled soon after virion entry. Interaction with host PPIA/CYPA protects the virus from restriction by host TRIM5-alpha and from an unknown antiviral activity in host cells. This capsid restriction by TRIM5 is one of the factors which restricts SIV to the simian species. Its function is as follows. Nucleocapsid protein p7 encapsulates and protects viral dimeric unspliced (genomic) RNA. Binds these RNAs through its zinc fingers. Facilitates rearangement of nucleic acid secondary structure during retrotranscription of genomic RNA. This capability is referred to as nucleic acid chaperone activity. The aspartyl protease mediates proteolytic cleavages of Gag and Gag-Pol polyproteins during or shortly after the release of the virion from the plasma membrane. Cleavages take place as an ordered, step-wise cascade to yield mature proteins. This process is called maturation. Displays maximal activity during the budding process just prior to particle release from the cell. Also cleaves Nef and Vif, probably concomitantly with viral structural proteins on maturation of virus particles. Hydrolyzes host EIF4GI and PABP1 in order to shut off the capped cellular mRNA translation. The resulting inhibition of cellular protein synthesis serves to ensure maximal viral gene expression and to evade host immune response. In terms of biological role, reverse transcriptase/ribonuclease H (RT) is a multifunctional enzyme that converts the viral dimeric RNA genome into dsDNA in the cytoplasm, shortly after virus entry into the cell. This enzyme displays a DNA polymerase activity that can copy either DNA or RNA templates, and a ribonuclease H (RNase H) activity that cleaves the RNA strand of RNA-DNA heteroduplexes in a partially processive 3' to 5' endonucleasic mode. Conversion of viral genomic RNA into dsDNA requires many steps. A tRNA binds to the primer-binding site (PBS) situated at the 5'-end of the viral RNA. RT uses the 3' end of the tRNA primer to perform a short round of RNA-dependent minus-strand DNA synthesis. The reading proceeds through the U5 region and ends after the repeated (R) region which is present at both ends of viral RNA. The portion of the RNA-DNA heteroduplex is digested by the RNase H, resulting in a ssDNA product attached to the tRNA primer. This ssDNA/tRNA hybridizes with the identical R region situated at the 3' end of viral RNA. This template exchange, known as minus-strand DNA strong stop transfer, can be either intra- or intermolecular. RT uses the 3' end of this newly synthesized short ssDNA to perform the RNA-dependent minus-strand DNA synthesis of the whole template. RNase H digests the RNA template except for two polypurine tracts (PPTs) situated at the 5'-end and near the center of the genome. It is not clear if both polymerase and RNase H activities are simultaneous. RNase H can probably proceed both in a polymerase-dependent (RNA cut into small fragments by the same RT performing DNA synthesis) and a polymerase-independent mode (cleavage of remaining RNA fragments by free RTs). Secondly, RT performs DNA-directed plus-strand DNA synthesis using the PPTs that have not been removed by RNase H as primers. PPTs and tRNA primers are then removed by RNase H. The 3' and 5' ssDNA PBS regions hybridize to form a circular dsDNA intermediate. Strand displacement synthesis by RT to the PBS and PPT ends produces a blunt ended, linear dsDNA copy of the viral genome that includes long terminal repeats (LTRs) at both ends. Functionally, integrase catalyzes viral DNA integration into the host chromosome, by performing a series of DNA cutting and joining reactions. This enzyme activity takes place after virion entry into a cell and reverse transcription of the RNA genome in dsDNA. The first step in the integration process is 3' processing. This step requires a complex comprising the viral genome, matrix protein, Vpr and integrase. This complex is called the pre-integration complex (PIC). The integrase protein removes 2 nucleotides from each 3' end of the viral DNA, leaving recessed CA OH's at the 3' ends. In the second step, the PIC enters cell nucleus. This process is mediated through integrase and Vpr proteins, and allows the virus to infect a non dividing cell. This ability to enter the nucleus is specific of lentiviruses, other retroviruses cannot and rely on cell division to access cell chromosomes. In the third step, termed strand transfer, the integrase protein joins the previously processed 3' ends to the 5' ends of strands of target cellular DNA at the site of integration. The 5'-ends are produced by integrase-catalyzed staggered cuts, 5 bp apart. A Y-shaped, gapped, recombination intermediate results, with the 5'-ends of the viral DNA strands and the 3' ends of target DNA strands remaining unjoined, flanking a gap of 5 bp. The last step is viral DNA integration into host chromosome. This involves host DNA repair synthesis in which the 5 bp gaps between the unjoined strands are filled in and then ligated. Since this process occurs at both cuts flanking the SIV genome, a 5 bp duplication of host DNA is produced at the ends of SIV integration. Alternatively, Integrase may catalyze the excision of viral DNA just after strand transfer, this is termed disintegration. The protein is Gag-Pol polyprotein (gag-pol) of Cercopithecidae (Old World monkeys).